A 565-amino-acid chain; its full sequence is Zinc finger protein 512 (565 aa).

The disordered stretch occupies residues 1–30; the sequence is MSSRLGAVPATSGPTTFKQQRSTRIVGAKN. Residues 12-23 are compositionally biased toward polar residues; sequence SGPTTFKQQRST. Glycyl lysine isopeptide (Lys-Gly) (interchain with G-Cter in SUMO2) cross-links involve residues lysine 18 and lysine 83. A disordered region spans residues 85–147; that stretch reads AATSHVEGSG…QARRIRKEPP (63 aa). Basic residues predominate over residues 118 to 129; it reads KKHKLYGRKQRP. The segment at 196–219 adopts a C2H2-type 1 zinc-finger fold; it reads FTCHHCGKQLRSLAGMKYHVMANH. Lysine 226 is covalently cross-linked (Glycyl lysine isopeptide (Lys-Gly) (interchain with G-Cter in SUMO2)). A C2H2-type 2 zinc finger spans residues 286–309; the sequence is LKCHHCGKPYRSKAGLAYHLRSEH. Lysine 332 participates in a covalent cross-link: Glycyl lysine isopeptide (Lys-Gly) (interchain with G-Cter in SUMO2). The C2H2-type 3; atypical zinc finger occupies 405–429; the sequence is IQCPNQGCEAVYSSVSGLKAHLGSC. A C2H2-type 4 zinc finger spans residues 439–462; sequence YKCLLCQKEFVSESGVKYHINSVH. Positions 484–493 are enriched in basic and acidic residues; that stretch reads KQRQQEEEKR. The interval 484-565 is disordered; that stretch reads KQRQQEEEKR…PKTNHKRGRK (82 aa). A compositionally biased stretch (basic residues) spans 494–507; the sequence is RQQHRSRRSLRRRQ. The span at 522 to 531 shows a compositional bias: basic and acidic residues; sequence VGKDQRRNEE. Positions 554 to 565 are enriched in basic residues; the sequence is KPPKTNHKRGRK.

The protein belongs to the krueppel C2H2-type zinc-finger protein family.

Its subcellular location is the nucleus. Functionally, may be involved in transcriptional regulation. In Macaca fascicularis (Crab-eating macaque), this protein is Zinc finger protein 512 (ZNF512).